A 688-amino-acid polypeptide reads, in one-letter code: NADPH-dependent diflavin oxidoreductase 1 (688 aa).

The segment at 26-76 (HLHRHADTSPTNQHNTSHKMTTTEPIHVTTGSGESRDHTEPRHVTPTSPNA) is disordered. Polar residues predominate over residues 33–58 (TSPTNQHNTSHKMTTTEPIHVTTGSG). Over residues 59-68 (ESRDHTEPRH) the composition is skewed to basic and acidic residues. The Flavodoxin-like domain occupies 82–227 (ITIAYATETG…MYNEWQARFC (146 aa)). FMN-binding positions include 88–93 (TETGNA), 136–139 (STTG), 174–183 (LGDSSYPRFN), and D209. Residues 277 to 543 (KDVLQGTVVG…KHSTPIPDLD (267 aa)) enclose the FAD-binding FR-type domain. FAD is bound by residues R453, 483–486 (RLFS), and 515–518 (GVLT). NADP(+) is bound by residues T554, 607–608 (SR), and 613–617 (GGYVQ). W688 is a binding site for FAD.

It belongs to the NADPH-dependent diflavin oxidoreductase NDOR1 family. In the N-terminal section; belongs to the flavodoxin family. This sequence in the C-terminal section; belongs to the flavoprotein pyridine nucleotide cytochrome reductase family. Interacts with DRE2; as part of the cytosolic iron-sulfur (Fe-S) protein assembly (CIA) machinery. FAD is required as a cofactor. FMN serves as cofactor.

The protein localises to the cytoplasm. The protein resides in the mitochondrion. The enzyme catalyses 2 oxidized [2Fe-2S]-[protein] + NADPH = 2 reduced [2Fe-2S]-[protein] + NADP(+) + H(+). Functionally, NADPH-dependent reductase which is a central component of the cytosolic iron-sulfur (Fe-S) protein assembly (CIA) machinery. Transfers electrons from NADPH via its FAD and FMN prosthetic groups to the [2Fe-2S] cluster of DRE2, another key component of the CIA machinery. In turn, this reduced cluster provides electrons for assembly of cytosolic iron-sulfur cluster proteins. Positively controls H(2)O(2)-induced cell death. The chain is NADPH-dependent diflavin oxidoreductase 1 from Yarrowia lipolytica (strain CLIB 122 / E 150) (Yeast).